Reading from the N-terminus, the 845-residue chain is Putative DEAD-box ATP-dependent RNA helicase 29 (845 aa).

A Q motif motif is present at residues 28–56 (GGFESLNLGPNVFNAIKKKGYKVPTPIQR). Positions 59 to 232 (MPLILSGVDV…KAGLREPQLV (174 aa)) constitute a Helicase ATP-binding domain. 72–79 (ARTGSGKT) contributes to the ATP binding site. A DEAD box motif is present at residues 180–183 (DEAD). The Helicase C-terminal domain maps to 256 to 411 (KYSALLYLVR…EVLKNMEEVM (156 aa)). The tract at residues 675–845 (SGKIKTESGA…GGGGKRGRGR (171 aa)) is disordered. Basic and acidic residues-rich tracts occupy residues 696–716 (RWQERSHKKVSRDSGDADETT) and 738–754 (VRSEIKDLDQVRKERQQ). A compositionally biased stretch (gly residues) spans 770 to 799 (GGRGGARGGRGGGARGGRGGSRDFGGGGRD). Residues 806–817 (RGGRSGGRDFGG) show a composition bias toward basic and acidic residues. Positions 828-845 (GGKRGGGRGGGGKRGRGR) are enriched in basic residues.

The protein belongs to the DEAD box helicase family. DDX54/DBP10 subfamily.

It catalyses the reaction ATP + H2O = ADP + phosphate + H(+). This Arabidopsis thaliana (Mouse-ear cress) protein is Putative DEAD-box ATP-dependent RNA helicase 29 (RH29).